The primary structure comprises 183 residues: NADH-ubiquinone oxidoreductase 20.8 kDa subunit (183 aa).

2 consecutive CHCH domains span residues 44 to 87 (GARC…IADI) and 88 to 130 (NKSC…LGLK). 4 consecutive short sequence motifs (cx9C motif) follow at residues 47-57 (CRDYNDDFMQC), 69-79 (CLKEGRRVTRC), 91-101 (CLEEFRKHWTC), and 112-122 (CRPAEWKLNKC). Intrachain disulfides connect C47–C79, C57–C69, C91–C122, and C101–C112. Positions 161–183 (EPFVPPTQTGDNNKAPAAASSSS) are disordered.

This sequence belongs to the complex I NDUFA8 subunit family. As to quaternary structure, complex I is composed of about 40 different subunits. This is a component of the hydrophobic fraction. The cofactor is iron-sulfur cluster.

It is found in the mitochondrion inner membrane. Functionally, accessory subunit of the mitochondrial membrane respiratory chain NADH dehydrogenase (Complex I), that is believed not to be involved in catalysis. Complex I functions in the transfer of electrons from NADH to the respiratory chain. The immediate electron acceptor for the enzyme is believed to be ubiquinone. This chain is NADH-ubiquinone oxidoreductase 20.8 kDa subunit, found in Neurospora crassa (strain ATCC 24698 / 74-OR23-1A / CBS 708.71 / DSM 1257 / FGSC 987).